The sequence spans 760 residues: Photosystem I P700 chlorophyll a apoprotein A1 (760 aa).

The disordered stretch occupies residues methionine 1–alanine 22. Positions serine 8–alanine 22 are enriched in basic and acidic residues. The next 8 helical transmembrane spans lie at isoleucine 76–alanine 99, leucine 162–histidine 185, methionine 201–alanine 225, isoleucine 309–tyrosine 327, arginine 368–tyrosine 391, leucine 407–valine 433, alanine 455–histidine 477, and leucine 551–leucine 569. Cysteine 593 and cysteine 602 together coordinate [4Fe-4S] cluster. 2 helical membrane passes run histidine 609–tryptophan 630 and isoleucine 674–phenylalanine 696. Divinylchlorophyll a' is bound at residue histidine 685. Methionine 693 and tyrosine 701 together coordinate divinyl chlorophyll a. Tryptophan 702 is a phylloquinone binding site. Residues alanine 734–alanine 754 form a helical membrane-spanning segment.

Belongs to the PsaA/PsaB family. As to quaternary structure, the PsaA/B heterodimer binds the P700 divinyl chlorophyll special pair and subsequent electron acceptors. PSI consists of a core antenna complex that captures photons, and an electron transfer chain that converts photonic excitation into a charge separation. The cyanobacterial PSI reaction center is composed of one copy each of PsaA,B,C,D,E,F,I,J,K,L,M and X, and forms trimeric complexes. It depends on PSI electron transfer chain: 5 divinyl chlorophyll a, 1 divinyl chlorophyll a', 2 phylloquinones and 3 4Fe-4S clusters. PSI core antenna: 90 divinyl chlorophyll a, 22 carotenoids, 3 phospholipids and 1 galactolipid. P700 is a divinyl chlorophyll a/divinyl chlorophyll a' dimer, A0 is one or more divinyl chlorophyll a, A1 is one or both phylloquinones and FX is a shared 4Fe-4S iron-sulfur center. as a cofactor.

The protein localises to the cellular thylakoid membrane. The catalysed reaction is reduced [plastocyanin] + hnu + oxidized [2Fe-2S]-[ferredoxin] = oxidized [plastocyanin] + reduced [2Fe-2S]-[ferredoxin]. In terms of biological role, psaA and PsaB bind P700, the primary electron donor of photosystem I (PSI), as well as the electron acceptors A0, A1 and FX. PSI is a plastocyanin/cytochrome c6-ferredoxin oxidoreductase, converting photonic excitation into a charge separation, which transfers an electron from the donor P700 chlorophyll pair to the spectroscopically characterized acceptors A0, A1, FX, FA and FB in turn. Oxidized P700 is reduced on the lumenal side of the thylakoid membrane by plastocyanin or cytochrome c6. The chain is Photosystem I P700 chlorophyll a apoprotein A1 from Prochlorococcus marinus (strain MIT 9515).